A 565-amino-acid polypeptide reads, in one-letter code: Protein nucleotidyltransferase YdiU (565 aa).

ATP-binding residues include Gly-118, Gly-120, Arg-121, Lys-141, Asp-153, Gly-154, Arg-211, and Arg-218. Asp-290 (proton acceptor) is an active-site residue. Residues Asn-291 and Asp-300 each contribute to the Mg(2+) site. Asp-300 is an ATP binding site.

This sequence belongs to the SELO family. Mg(2+) is required as a cofactor. Mn(2+) serves as cofactor.

The enzyme catalyses L-seryl-[protein] + ATP = 3-O-(5'-adenylyl)-L-seryl-[protein] + diphosphate. It carries out the reaction L-threonyl-[protein] + ATP = 3-O-(5'-adenylyl)-L-threonyl-[protein] + diphosphate. It catalyses the reaction L-tyrosyl-[protein] + ATP = O-(5'-adenylyl)-L-tyrosyl-[protein] + diphosphate. The catalysed reaction is L-histidyl-[protein] + UTP = N(tele)-(5'-uridylyl)-L-histidyl-[protein] + diphosphate. The enzyme catalyses L-seryl-[protein] + UTP = O-(5'-uridylyl)-L-seryl-[protein] + diphosphate. It carries out the reaction L-tyrosyl-[protein] + UTP = O-(5'-uridylyl)-L-tyrosyl-[protein] + diphosphate. Functionally, nucleotidyltransferase involved in the post-translational modification of proteins. It can catalyze the addition of adenosine monophosphate (AMP) or uridine monophosphate (UMP) to a protein, resulting in modifications known as AMPylation and UMPylation. This chain is Protein nucleotidyltransferase YdiU, found in Nitrosospira multiformis (strain ATCC 25196 / NCIMB 11849 / C 71).